A 355-amino-acid polypeptide reads, in one-letter code: Adenine deaminase (355 aa).

The Zn(2+) site is built by His23, His25, and His211. The active-site Proton donor is Glu214. Asp292 contacts Zn(2+). Residue Asp293 participates in substrate binding.

The protein belongs to the metallo-dependent hydrolases superfamily. Adenosine and AMP deaminases family. Adenine deaminase type 2 subfamily. Zn(2+) is required as a cofactor.

The protein localises to the cytoplasm. It is found in the nucleus. It catalyses the reaction adenine + H2O + H(+) = hypoxanthine + NH4(+). In terms of biological role, catalyzes the hydrolytic deamination of adenine to hypoxanthine. Plays an important role in the purine salvage pathway and in nitrogen catabolism. This Kluyveromyces lactis (strain ATCC 8585 / CBS 2359 / DSM 70799 / NBRC 1267 / NRRL Y-1140 / WM37) (Yeast) protein is Adenine deaminase.